A 290-amino-acid polypeptide reads, in one-letter code: MQIPFHTVGLVGKYDNQGMEASVRALAEFLRGRGHAVVLACQTAEHFGITDFPTRNLHDLATESDAVVVLGGDGTMLSIARELSAHGVPLIGINQGRLGFLTDITVDHMYDAVDEILSGQYVAEERILLKGQILRGGERVFEATAFNDVVVGKGGSGRLIDLEIAIDGEFVYSQRADGLVVTTPTGTTAYALSAGGPIVHPTLEAVALVPICPHTLSARPIVVSGRSRIELHLTYADDARVHFDGQHHFDLQSGDHVWITRANRPITLLHPHSYSYYDTLRQKLHWGKKL.

D73 acts as the Proton acceptor in catalysis. NAD(+) contacts are provided by residues 73-74, 147-148, R158, R175, D177, 188-193, and Q246; these read DG, ND, and TAYALS.

It belongs to the NAD kinase family. It depends on a divalent metal cation as a cofactor.

It localises to the cytoplasm. It carries out the reaction NAD(+) + ATP = ADP + NADP(+) + H(+). Involved in the regulation of the intracellular balance of NAD and NADP, and is a key enzyme in the biosynthesis of NADP. Catalyzes specifically the phosphorylation on 2'-hydroxyl of the adenosine moiety of NAD to yield NADP. The sequence is that of NAD kinase from Thiobacillus denitrificans (strain ATCC 25259 / T1).